The sequence spans 140 residues: uncharacterized protein (140 aa).

This is an uncharacterized protein from Spirochaeta aurantia.